Here is a 232-residue protein sequence, read N- to C-terminus: TIR domain-containing adapter molecule 2 (232 aa).

Positions 1–39 (MGVGKSKLDKCPLSWHKKDSVDADQDGHESDSKNSEEAC) are enriched in basic and acidic residues. The interval 1 to 70 (MGVGKSKLDK…EAKGAGPEEQ (70 aa)) is disordered. The N-myristoyl glycine moiety is linked to residue Gly2. In terms of domain architecture, TIR spans 74–226 (EFLKFVILHA…SIWKETRSVS (153 aa)). At Tyr164 the chain carries Phosphotyrosine.

Homodimer. Interacts with TLR4, TICAM1, IRF3 and IRF7 in response to LPS. Interacts with IL1R1, IL1RAP, IRAK2, IRAK3 and TRAF6. Interacts with protein kinase-inactive mutants of IRAK1 and IRAK4. Isoform 1 interacts with isoform 2; the interaction occurs in late endosomes and disrupts the interaction between isoform 1 and TICAM1. Interacts with MYD88; the interaction decreases after IL-18 stimulation in a time-dependent manner. Interacts with IL18R1 and IL18RAP. Interacts with TLR2. Interacts with RAB11FIP2. Post-translationally, myristoylated. Required for membrane association which is critical for its ability to initiate efficient signaling. Phosphorylated by PRKCE in response to LPS. Phosphorylation is essential for its function. It is depleted from the membrane upon phosphorylation. Tyrosine phosphorylation is inhibited by phosphatase PTPN4.

The protein resides in the cytoplasm. It localises to the golgi apparatus. Its subcellular location is the cell membrane. The protein localises to the early endosome. It is found in the late endosome. The protein resides in the endoplasmic reticulum. It localises to the cell projection. Its subcellular location is the phagocytic cup. Its function is as follows. Functions as a sorting adapter in different signaling pathways to facilitate downstream signaling leading to type I interferon induction. In TLR4 signaling, physically bridges TLR4 and TICAM1 and functionally transmits signal to TICAM1 in early endosomes after endocytosis of TLR4. In TLR2 signaling, physically bridges TLR2 and MYD88 and is required for the TLR2-dependent movement of MYD88 to endosomes following ligand engagement. Involved in IL-18 signaling and is proposed to function as a sorting adapter for MYD88 in IL-18 signaling during adaptive immune response. Forms a complex with RAB11FIP2 that is recruited to the phagosomes to promote the activation of the actin-regulatory GTPases RAC1 and CDC42 and subsequent phagocytosis of Gram-negative bacteria. This chain is TIR domain-containing adapter molecule 2 (Ticam2), found in Mus musculus (Mouse).